A 475-amino-acid polypeptide reads, in one-letter code: MTTILTYPFKNLPTASKWALRFSIRPLSCSSQLRAAPAVQTKTKKTLAKPNIRNVVVVDGVRTPFLLSGTSYKDLMPHDLARAALTGLLHRTSVPKEVVDYIIFGTVIQEVKTSNVAREAALGAGFSDKTPAHTVTMACISANQAMTTGVGLIASGQCDVIVAGGVELMSDVPIRHSRKMRKLMLDLNKAKSMGQRLSLISKFRFNFLAPELPAVSEFSTSETMGHSADRLAAAFAVSRLEQDEYALRSHSLAKKAQDEGLLSDVVPFKVPGKDTVTKDNGIRPSSLEQMAKLKPAFIKPYGTVTAANSSFLTDGASAMLIMAEEKALAMGYKPKAYLRDFMYVSQDPKDQLLLGPTYATPKVLEKAGLTMNDIDAFEFHEAFSGQILANFKAMDSDWFAENYMGRKTKVGLPPLEKFNNWGGSLSLGHPFGATGCRLVMAAANRLRKEGGQYGLVAACAAGGQGHAMIVEAYPK.

The N-terminal 34 residues, 1 to 34, are a transit peptide targeting the mitochondrion; it reads MTTILTYPFKNLPTASKWALRFSIRPLSCSSQLR. Lys-73 is subject to N6-acetyllysine; alternate. Residue Lys-73 is modified to N6-succinyllysine; alternate. Residue Cys-139 is the Acyl-thioester intermediate of the active site. The stretch at 174–221 is an intramembrane region; that stretch reads IRHSRKMRKLMLDLNKAKSMGQRLSLISKFRFNFLAPELPAVSEFSTS. Residue Lys-189 is modified to N6-acetyllysine; alternate. Position 189 is an N6-succinyllysine; alternate (Lys-189). 3 positions are modified to N6-succinyllysine: Lys-191, Lys-273, and Lys-292. Lys-294 carries the post-translational modification N6-acetyllysine; alternate. Lys-294 carries the post-translational modification N6-succinyllysine; alternate. Lys-299 carries the N6-acetyllysine modification. Lys-333 carries the post-translational modification N6-acetyllysine; alternate. Position 333 is an N6-succinyllysine; alternate (Lys-333). N6-acetyllysine is present on residues Lys-349 and Lys-362. Cys-459 (proton donor/acceptor) is an active-site residue.

Belongs to the thiolase-like superfamily. Thiolase family. Heterotetramer of 2 alpha/HADHA and 2 beta/HADHB subunits; forms the mitochondrial trifunctional enzyme. Also purified as higher order heterooligomers including a 4 alpha/HADHA and 4 beta/HADHB heterooligomer which physiological significance remains unclear. The mitochondrial trifunctional enzyme interacts with MTLN. Interacts with RSAD2/viperin.

Its subcellular location is the mitochondrion. It is found in the mitochondrion inner membrane. It localises to the mitochondrion outer membrane. The protein resides in the endoplasmic reticulum. The enzyme catalyses an acyl-CoA + acetyl-CoA = a 3-oxoacyl-CoA + CoA. It carries out the reaction butanoyl-CoA + acetyl-CoA = 3-oxohexanoyl-CoA + CoA. It catalyses the reaction hexanoyl-CoA + acetyl-CoA = 3-oxooctanoyl-CoA + CoA. The catalysed reaction is octanoyl-CoA + acetyl-CoA = 3-oxodecanoyl-CoA + CoA. The enzyme catalyses decanoyl-CoA + acetyl-CoA = 3-oxododecanoyl-CoA + CoA. It carries out the reaction dodecanoyl-CoA + acetyl-CoA = 3-oxotetradecanoyl-CoA + CoA. It catalyses the reaction tetradecanoyl-CoA + acetyl-CoA = 3-oxohexadecanoyl-CoA + CoA. It participates in lipid metabolism; fatty acid beta-oxidation. Its function is as follows. Mitochondrial trifunctional enzyme catalyzes the last three of the four reactions of the mitochondrial beta-oxidation pathway. The mitochondrial beta-oxidation pathway is the major energy-producing process in tissues and is performed through four consecutive reactions breaking down fatty acids into acetyl-CoA. Among the enzymes involved in this pathway, the trifunctional enzyme exhibits specificity for long-chain fatty acids. Mitochondrial trifunctional enzyme is a heterotetrameric complex composed of two proteins, the trifunctional enzyme subunit alpha/HADHA carries the 2,3-enoyl-CoA hydratase and the 3-hydroxyacyl-CoA dehydrogenase activities, while the trifunctional enzyme subunit beta/HADHB described here bears the 3-ketoacyl-CoA thiolase activity. The sequence is that of Trifunctional enzyme subunit beta, mitochondrial (HADHB) from Pan troglodytes (Chimpanzee).